The sequence spans 574 residues: Urease subunit alpha (574 aa).

Positions 131–574 constitute a Urease domain; the sequence is GAIDSHIHFI…LPMAQRYLLL (444 aa). Ni(2+) contacts are provided by His136, His138, and Lys219. Lys219 carries the N6-carboxylysine modification. Substrate is bound at residue His221. Ni(2+)-binding residues include His248 and His274. His322 (proton donor) is an active-site residue. Asp362 lines the Ni(2+) pocket. The tract at residues 384–403 is disordered; that stretch reads KVQRGPLPEDAANPRGSRND.

It belongs to the metallo-dependent hydrolases superfamily. Urease alpha subunit family. Heterotrimer of UreA (gamma), UreB (beta) and UreC (alpha) subunits. Three heterotrimers associate to form the active enzyme. Ni cation is required as a cofactor. In terms of processing, carboxylation allows a single lysine to coordinate two nickel ions.

The protein localises to the cytoplasm. It catalyses the reaction urea + 2 H2O + H(+) = hydrogencarbonate + 2 NH4(+). It participates in nitrogen metabolism; urea degradation; CO(2) and NH(3) from urea (urease route): step 1/1. This is Urease subunit alpha from Prochlorococcus marinus (strain MIT 9313).